Here is a 296-residue protein sequence, read N- to C-terminus: Large ribosomal subunit protein uL15m (296 aa).

A mitochondrion-targeting transit peptide spans Met-1–Arg-21. The tract at residues Val-22–Gly-66 is disordered. Residues Pro-36–Gly-52 show a composition bias toward basic residues.

It belongs to the universal ribosomal protein uL15 family. As to quaternary structure, component of the mitochondrial large ribosomal subunit (mt-LSU). Mature mammalian 55S mitochondrial ribosomes consist of a small (28S) and a large (39S) subunit. The 28S small subunit contains a 12S ribosomal RNA (12S mt-rRNA) and 30 different proteins. The 39S large subunit contains a 16S rRNA (16S mt-rRNA), a copy of mitochondrial valine transfer RNA (mt-tRNA(Val)), which plays an integral structural role, and 52 different proteins.

Its subcellular location is the mitochondrion. The sequence is that of Large ribosomal subunit protein uL15m (MRPL15) from Homo sapiens (Human).